Consider the following 536-residue polypeptide: Global nitrogen regulator NrpR (536 aa).

The tract at residues 7–72 is winged helix-turn-helix; sequence VEILSILSEA…EITEKGIEEL (66 aa). 2 NRD regions span residues 80–314 and 315–536; these read RIGS…KGKF and KVTP…YDDI.

Belongs to the NrpR family. In terms of assembly, homotetramer. Binds to a single operator as a dimer and cooperatively to two operators as a dimer pair.

Its activity is regulated as follows. Under nitrogen limitation, binding of the intracellular nitrogen metabolite 2-oxoglutarate to NrpR decreases the binding affinity of NrpR to DNA, leading to initiation of transcription. Transcriptional repressor of nitrogen fixation and assimilation genes. Binds to two tandem operators in the glnA and nif promoters, thereby blocking transcription of the genes. The chain is Global nitrogen regulator NrpR from Methanococcus maripaludis (strain DSM 14266 / JCM 13030 / NBRC 101832 / S2 / LL).